The primary structure comprises 310 residues: Small ribosomal subunit biogenesis GTPase RsgA 2 (310 aa).

The CP-type G domain maps to 77 to 238; that stretch reads LSKQSHILAA…IIDTPGIKGF (162 aa). GTP-binding positions include 126–129 and 180–188; these read NKVD and GHSGVGKST. Zn(2+)-binding residues include Cys262, Cys267, His269, and Cys275.

Belongs to the TRAFAC class YlqF/YawG GTPase family. RsgA subfamily. In terms of assembly, monomer. Associates with 30S ribosomal subunit, binds 16S rRNA. Requires Zn(2+) as cofactor.

It localises to the cytoplasm. Its function is as follows. One of several proteins that assist in the late maturation steps of the functional core of the 30S ribosomal subunit. Helps release RbfA from mature subunits. May play a role in the assembly of ribosomal proteins into the subunit. Circularly permuted GTPase that catalyzes slow GTP hydrolysis, GTPase activity is stimulated by the 30S ribosomal subunit. The protein is Small ribosomal subunit biogenesis GTPase RsgA 2 of Bacteroides thetaiotaomicron (strain ATCC 29148 / DSM 2079 / JCM 5827 / CCUG 10774 / NCTC 10582 / VPI-5482 / E50).